Here is a 228-residue protein sequence, read N- to C-terminus: Acyl-protein thioesterase 1 (228 aa).

Catalysis depends on charge relay system residues S119, D174, and H208.

The protein belongs to the AB hydrolase superfamily. AB hydrolase 2 family.

Its subcellular location is the cytoplasm. It is found in the nucleus. It catalyses the reaction S-hexadecanoyl-L-cysteinyl-[protein] + H2O = L-cysteinyl-[protein] + hexadecanoate + H(+). Its function is as follows. Hydrolyzes fatty acids from S-acylated cysteine residues in proteins with a strong preference for palmitoylated G-alpha proteins over other acyl substrates. Mediates the deacylation of G-alpha proteins such as GPA1 in vivo, but has weak or no activity toward palmitoylated Ras proteins. Has weak lysophospholipase activity in vitro; however such activity may not exist in vivo. In Kluyveromyces lactis (strain ATCC 8585 / CBS 2359 / DSM 70799 / NBRC 1267 / NRRL Y-1140 / WM37) (Yeast), this protein is Acyl-protein thioesterase 1.